We begin with the raw amino-acid sequence, 195 residues long: SPbeta prophage-derived uncharacterized protein YotM (195 aa).

This Bacillus subtilis (strain 168) protein is SPbeta prophage-derived uncharacterized protein YotM (yotM).